The following is a 301-amino-acid chain: Mitochondrial ornithine transporter 1 (301 aa).

6 consecutive transmembrane segments (helical) span residues 5–25 (PAIQ…ACVL), 68–88 (SPAL…YGFC), 110–130 (AAAG…TELV), 168–188 (GFYH…FFFF), 207–227 (LGPI…WLAV), and 237–257 (IQVL…LSIV). Solcar repeat units lie at residues 7–91 (IQAA…CQQV), 104–197 (LSDL…SRSF), and 207–293 (LGPI…SRKL).

It belongs to the mitochondrial carrier (TC 2.A.29) family. Expressed in the liver (at protein level).

Its subcellular location is the mitochondrion inner membrane. The protein localises to the mitochondrion membrane. The catalysed reaction is L-citrulline(in) + L-ornithine(out) + H(+)(in) = L-citrulline(out) + L-ornithine(in) + H(+)(out). The enzyme catalyses L-ornithine(in) + L-arginine(out) = L-ornithine(out) + L-arginine(in). It catalyses the reaction L-ornithine(out) + L-lysine(in) = L-ornithine(in) + L-lysine(out). It carries out the reaction L-ornithine(out) + H(+)(in) = L-ornithine(in) + H(+)(out). The catalysed reaction is L-lysine(out) + H(+)(in) = L-lysine(in) + H(+)(out). Inhibited by pyridoxal 5'-phosphate as well as by mercurials (mersalyl, p-chloromercuribenzene sulfonate, and mercuric chloride), N-ethylmaleimide and spermine. In terms of biological role, mitochondrial ornithine-citrulline antiporter. Catalyzes the exchange between cytosolic ornithine and mitochondrial citrulline plus an H(+), the proton compensates the positive charge of ornithine thus leading to an electroneutral transport. Plays a crucial role in the urea cycle, by connecting the cytosolic and the intramitochondrial reactions of the urea cycle. Lysine and arginine are also transported by the antiport mechanism. In addition, catalyzes an electroneutral exchange of ornithine or lysine for H(+), a reaction driven by the pH gradient across the inner membrane. The polypeptide is Mitochondrial ornithine transporter 1 (Slc25a15) (Rattus norvegicus (Rat)).